The primary structure comprises 246 residues: 23S rRNA (guanosine-2'-O-)-methyltransferase RlmB (246 aa).

Glycine 196, isoleucine 216, and leucine 225 together coordinate S-adenosyl-L-methionine.

Belongs to the class IV-like SAM-binding methyltransferase superfamily. RNA methyltransferase TrmH family. RlmB subfamily. In terms of assembly, homodimer.

The protein resides in the cytoplasm. The catalysed reaction is guanosine(2251) in 23S rRNA + S-adenosyl-L-methionine = 2'-O-methylguanosine(2251) in 23S rRNA + S-adenosyl-L-homocysteine + H(+). Functionally, specifically methylates the ribose of guanosine 2251 in 23S rRNA. The chain is 23S rRNA (guanosine-2'-O-)-methyltransferase RlmB from Yersinia pestis.